The following is a 357-amino-acid chain: sn-glycerol-3-phosphate import ATP-binding protein UgpC (357 aa).

Positions 4 to 235 (LKLQAVTKSY…PASLFVASFI (232 aa)) constitute an ABC transporter domain. 37–44 (GPSGCGKS) serves as a coordination point for ATP.

It belongs to the ABC transporter superfamily. sn-glycerol-3-phosphate importer (TC 3.A.1.1.3) family. The complex is composed of two ATP-binding proteins (UgpC), two transmembrane proteins (UgpA and UgpE) and a solute-binding protein (UgpB).

It is found in the cell inner membrane. It catalyses the reaction sn-glycerol 3-phosphate(out) + ATP + H2O = sn-glycerol 3-phosphate(in) + ADP + phosphate + H(+). In terms of biological role, part of the ABC transporter complex UgpBAEC involved in sn-glycerol-3-phosphate (G3P) import. Responsible for energy coupling to the transport system. This is sn-glycerol-3-phosphate import ATP-binding protein UgpC from Yersinia pestis bv. Antiqua (strain Antiqua).